We begin with the raw amino-acid sequence, 142 residues long: Large ribosomal subunit protein uL11 (142 aa).

The residue at position 2 (alanine 2) is a N,N,N-trimethylalanine. Lysine 4 and lysine 40 each carry N6,N6,N6-trimethyllysine.

Belongs to the universal ribosomal protein uL11 family. As to quaternary structure, part of the ribosomal stalk of the 50S ribosomal subunit. Interacts with L10 and the large rRNA to form the base of the stalk. L10 forms an elongated spine to which L12 dimers bind in a sequential fashion forming a multimeric L10(L12)X complex. In terms of processing, one or more lysine residues are methylated.

Its function is as follows. Forms part of the ribosomal stalk which helps the ribosome interact with GTP-bound translation factors. The polypeptide is Large ribosomal subunit protein uL11 (Shigella flexneri).